The primary structure comprises 373 residues: Zinc finger protein CONSTANS (373 aa).

The B box-type 1; atypical zinc finger occupies 15 to 57; sequence NRARPCDTCRSNACTVYCHADSAYLCMSCDAQVHSANRVASRH. 8 residues coordinate Zn(2+): Cys20, Cys23, Cys43, His48, Cys63, Cys66, Cys86, and His91. Residues 58–108 form a B box-type 2; atypical zinc finger; sequence KRVRVCESCERAPAAFLCEADDASLCTACDSEVHSANPLARRHQRVPILPI. A compositionally biased stretch (polar residues) spans 109 to 120; that stretch reads SGNSFSSMTTTH. A disordered region spans residues 109–130; sequence SGNSFSSMTTTHHQSEKTMTDP. The span at 121-130 shows a compositional bias: basic and acidic residues; sequence HQSEKTMTDP. In terms of domain architecture, CCT spans 306-348; the sequence is REARVLRYREKRKTRKFEKTIRYASRKAYAEIRPRVNGRFAKR.

The protein belongs to the CONSTANS family. As to quaternary structure, interacts with ADO3, SPA1, SPA2, SPA3 and SPA4. Interacts with MRG1 and MRG2 (via MRG domain). Interacts (via B-box) with MIP1A. Interacts with AS1 to form a functional complex regulating FT expression. Interacts with NFYC9. Component of a red light-dependent nuclear complex made of PHL, PHYB and CO. Interacts directly with PHL in the presence of PHYB. Expressed in leaves, shoots and shoot apical meristem. Detected in the vascular tissue of the hypocotyl, the cotyledons and the leaves. Restricted to the protoxylem and phloem in young inflorescence stems and to the phloem only in older inflorescences. Also detected in the vascular tissue of the root.

It localises to the nucleus. Functionally, transcription factor that acts in the long day flowering pathway and may mediate between the circadian clock and the control of flowering. Plays a role in the regulation of flowering time by acting on 'SUPPRESSOR OF OVEREXPRESSION OF CO1', 'TERMINAL FLOWER 1' and 'FLOWERING LOCUS T'. Also regulates P5CS2 and ACS10 (involved in proline and ethylene biosynthesis, respectively). Regulates the expression of NAKR1 by binding to the 5'-TGTG(N2-3)ATG-3' motif. This Arabidopsis thaliana (Mouse-ear cress) protein is Zinc finger protein CONSTANS.